The chain runs to 183 residues: Protein Syd (183 aa).

The protein belongs to the Syd family.

It is found in the cell inner membrane. Its function is as follows. Interacts with the SecY protein in vivo. May bind preferentially to an uncomplexed state of SecY, thus functioning either as a chelating agent for excess SecY in the cell or as a regulatory factor that negatively controls the translocase function. This chain is Protein Syd, found in Yersinia pseudotuberculosis serotype O:1b (strain IP 31758).